The sequence spans 56 residues: Turripeptide XIV-01 (56 aa).

An N-terminal signal peptide occupies residues 1–21 (MRFHVLLTVALLLTSLMSIEA). The propeptide occupies 22–30 (KPVNGAEME).

In terms of processing, contains 2 disulfide bonds. Expressed by the venom duct.

It localises to the secreted. This Gemmula speciosa (Splendid gem-turris) protein is Turripeptide XIV-01.